We begin with the raw amino-acid sequence, 238 residues long: MGSKTLPAPVPLHPAPQLNYSLLRTLNAFPVAVDQLYGLSALHTVQMNRWTVGFPQLQGLADPRFPGALPFPAAAAHLLPHKHPVHRKDRPRFDFANLAVAATQEDPPVTGQSRLSPERRPARGRLPAKSKKEFICRFCGRHFTKSYNLLIHERTHTDERPYTCDICHKAFRRQDHLRDHRYIHSKEKPFKCQECGKGFCQSRTLAVHKTLHLQTSSLSAAAAAGRCFGATATCGATV.

Residues 105–126 (EDPPVTGQSRLSPERRPARGRL) form a disordered region. 3 consecutive C2H2-type zinc fingers follow at residues 134-156 (FICRFCGRHFTKSYNLLIHERTH), 162-184 (YTCDICHKAFRRQDHLRDHRYIH), and 190-212 (FKCQECGKGFCQSRTLAVHKTLH).

This sequence belongs to the Odd C2H2-type zinc-finger protein family. As to expression, at the 8-somite stage, expressed in the pronephros, with weak generalized expression elsewhere. At 24 hpf, expressed in the kidney tubules and the anterior duct, and also in the gut. At 60 hpf, expressed in the tubules and the pectoral fin buds.

Its subcellular location is the nucleus. Its function is as follows. Transcriptional repressor. Required for pronephric kidney development. This chain is Protein odd-skipped-related 2, found in Danio rerio (Zebrafish).